We begin with the raw amino-acid sequence, 184 residues long: UPF0301 protein Sden_2674 (184 aa).

It belongs to the UPF0301 (AlgH) family.

This Shewanella denitrificans (strain OS217 / ATCC BAA-1090 / DSM 15013) protein is UPF0301 protein Sden_2674.